Consider the following 905-residue polypeptide: A disintegrin and metalloproteinase with thrombospondin motifs 8 (905 aa).

The signal sequence occupies residues 1 to 28 (MLRDPTTTGWPPLLLLLLQLPPPPLVCG). Positions 29–228 (APAGPGTGAQ…PFGSKTRSKR (200 aa)) are excised as a propeptide. Disordered regions lie at residues 139-163 (PQGAGDSLDQPHRLQRWGPGQRRED) and 186-225 (NGQGQERSDNEEDRKQDKEGLLKETEDSRKVPPPFGSKTR). Positions 191 to 215 (ERSDNEEDRKQDKEGLLKETEDSRK) are enriched in basic and acidic residues. The 211-residue stretch at 234–444 (RFVETLLVAD…GHGDCLLDAP (211 aa)) folds into the Peptidase M12B domain. 10 cysteine pairs are disulfide-bonded: Cys309–Cys362, Cys338–Cys344, Cys356–Cys439, Cys394–Cys423, Cys478–Cys502, Cys487–Cys523, Cys517–Cys528, Cys554–Cys591, Cys558–Cys596, and Cys569–Cys581. Zn(2+) is bound at residue His378. The active site involves Glu379. Positions 382 and 388 each coordinate Zn(2+). N-linked (GlcNAc...) asparagine glycosylation is found at Asn415, Asn480, and Asn506. A Disintegrin domain is found at 453-541 (GLPGHSTLYE…EDVENPKAVV (89 aa)). One can recognise a TSP type-1 1 domain in the interval 542–597 (DGDWGPWRPWGQCSRTCGGGIQFSNRECDNPMPQNGGRFCLGERVKYQSCNTEECP). Residue Asn615 is glycosylated (N-linked (GlcNAc...) asparagine). Positions 706 to 847 (RKISGSFTPF…RATTNIIQSL (142 aa)) are spacer. The region spanning 848 to 904 (PSAEWVLGDWSECPSTCRGSWQRRTVECRDPSGQASDTCDEALKPEDAKPCGSQPCP) is the TSP type-1 2 domain. The segment at 877-905 (DPSGQASDTCDEALKPEDAKPCGSQPCPL) is disordered.

The cofactor is Zn(2+). In terms of processing, the precursor is cleaved by a furin endopeptidase. Glycosylated. Can be O-fucosylated by POFUT2 on a serine or a threonine residue found within the consensus sequence C1-X(2)-(S/T)-C2-G of the TSP type-1 repeat domains where C1 and C2 are the first and second cysteine residue of the repeat, respectively. Fucosylated repeats can then be further glycosylated by the addition of a beta-1,3-glucose residue by the glucosyltransferase, B3GALTL. Fucosylation mediates the efficient secretion of ADAMTS family members. Can also be C-glycosylated with one or two mannose molecules on tryptophan residues within the consensus sequence W-X-X-W of the TPRs, and N-glycosylated. These other glycosylations can also facilitate secretion. As to expression, expressed specifically in adult lung and heart and low expression during mouse development.

It is found in the secreted. The protein localises to the extracellular space. It localises to the extracellular matrix. Has anti-angiogenic properties. This Mus musculus (Mouse) protein is A disintegrin and metalloproteinase with thrombospondin motifs 8 (Adamts8).